We begin with the raw amino-acid sequence, 377 residues long: uncharacterized protein (377 aa).

Residue 32-39 (GPINSGKT) participates in ATP binding.

Belongs to the archaeal ATPase family.

This is an uncharacterized protein from Methanocaldococcus jannaschii (strain ATCC 43067 / DSM 2661 / JAL-1 / JCM 10045 / NBRC 100440) (Methanococcus jannaschii).